A 423-amino-acid chain; its full sequence is Carboxypeptidase B2 (423 aa).

Positions 1–22 are cleaved as a signal peptide; the sequence is MKLCSLAVLVPIVLFCEQHVFA. Residues 23–114 constitute a propeptide, activation peptide; the sequence is FQSGQVLAAL…QISNDTVSPR (92 aa). N-linked (GlcNAc...) asparagine glycans are attached at residues Asn-44, Asn-73, and Asn-85. N-linked (GlcNAc...) (complex) asparagine glycosylation is present at Asn-108. The Peptidase M14 domain occupies 122 to 419; the sequence is QYHSLNEIYS…AAVSKIAWHV (298 aa). Cys-178 and Cys-191 are joined by a disulfide. Zn(2+) is bound by residues His-181 and Glu-184. Substrate-binding positions include 181 to 184 and Arg-239; that span reads HARE. Residue Asn-241 is glycosylated (N-linked (GlcNAc...) asparagine; partial). Intrachain disulfides connect Cys-250–Cys-274 and Cys-265–Cys-279. Residue 256–257 participates in substrate binding; sequence NR. His-310 serves as a coordination point for Zn(2+). Substrate is bound by residues 311–312 and Tyr-363; that span reads SY. Catalysis depends on Glu-385, which acts as the Proton donor/acceptor.

The protein belongs to the peptidase M14 family. Zn(2+) serves as cofactor. N-glycosylated. N-glycan at Asn-108: Hex5HexNAc4. Plasma; synthesized in the liver.

It is found in the secreted. It catalyses the reaction Release of C-terminal Arg and Lys from a polypeptide.. With respect to regulation, TAFI/CPB2 is unique among carboxypeptidases in that it spontaneously inactivates with a short half-life, a property that is crucial for its role in controlling blood clot lysis. The zymogen is stabilized by interactions with the activation peptide. Release of the activation peptide increases a dynamic flap mobility and in time this leads to conformational changes that disrupt the catalytic site and expose a cryptic thrombin-cleavage site present at Arg-324. Cleaves C-terminal arginine or lysine residues from biologically active peptides such as kinins or anaphylatoxins in the circulation thereby regulating their activities. Down-regulates fibrinolysis by removing C-terminal lysine residues from fibrin that has already been partially degraded by plasmin. This Homo sapiens (Human) protein is Carboxypeptidase B2 (CPB2).